Reading from the N-terminus, the 1316-residue chain is Serine/threonine-protein kinase 36 (1316 aa).

Positions 4-254 (YHVLEMIGEG…WPDLLHHPFI (251 aa)) constitute a Protein kinase domain. ATP contacts are provided by residues 10–18 (IGEGSFGRV) and Lys-33. The active-site Proton acceptor is Asp-125. The segment at 389–418 (QGFPEPRPEAMGRQSTDVVDPENEEPDSDD) is disordered. The span at 407–418 (VDPENEEPDSDD) shows a compositional bias: acidic residues.

Belongs to the protein kinase superfamily. Ser/Thr protein kinase family. In terms of assembly, interacts with SPAG16 and KIF27. Mg(2+) serves as cofactor. Weakly expressed in the heart and thymus, present at moderate to high levels in the lungs, pancreas, and kidneys and at higher levels in the brain and cerebellum. Very highly expressed in the testis.

It localises to the cytoplasm. Its subcellular location is the nucleus. It is found in the cytoskeleton. The protein resides in the cilium axoneme. The catalysed reaction is L-seryl-[protein] + ATP = O-phospho-L-seryl-[protein] + ADP + H(+). It catalyses the reaction L-threonyl-[protein] + ATP = O-phospho-L-threonyl-[protein] + ADP + H(+). Functionally, serine/threonine protein kinase which plays an important role in the sonic hedgehog (Shh) pathway by regulating the activity of GLI transcription factors. Controls the activity of the transcriptional regulators GLI1, GLI2 and GLI3 by opposing the effect of SUFU and promoting their nuclear localization. GLI2 requires an additional function of STK36 to become transcriptionally active, but the enzyme does not need to possess an active kinase catalytic site for this to occur. Required for postnatal development, possibly by regulating the homeostasis of cerebral spinal fluid or ciliary function. Essential for construction of the central pair apparatus of motile cilia. This is Serine/threonine-protein kinase 36 from Mus musculus (Mouse).